An 88-amino-acid polypeptide reads, in one-letter code: Large ribosomal subunit protein bL31B (88 aa).

Belongs to the bacterial ribosomal protein bL31 family. Type B subfamily. Part of the 50S ribosomal subunit.

The protein is Large ribosomal subunit protein bL31B of Leuconostoc mesenteroides subsp. mesenteroides (strain ATCC 8293 / DSM 20343 / BCRC 11652 / CCM 1803 / JCM 6124 / NCDO 523 / NBRC 100496 / NCIMB 8023 / NCTC 12954 / NRRL B-1118 / 37Y).